Here is an 846-residue protein sequence, read N- to C-terminus: Rho GTPase-activating protein 17 (846 aa).

Residues 14-246 form the BAR domain; sequence QTVGRAEKTE…MRAHQDKWAE (233 aa). Residues 252–442 enclose the Rho-GAP domain; sequence TPLEEHLKRS…PIIQHADWFF (191 aa). The span at 459 to 475 shows a compositional bias: polar residues; the sequence is TPNSNHSSHTGNDSDSG. The interval 459 to 482 is disordered; that stretch reads TPNSNHSSHTGNDSDSGTLERKRP. 2 positions are modified to phosphoserine: Ser-484 and Ser-575. Positions 519–807 are disordered; it reads IAPAFQPPLP…ASRIVTDTNS (289 aa). A compositionally biased stretch (polar residues) spans 592–619; it reads RNSNQMTTVPNQAQTGGNSHQLSVSTPH. A compositionally biased stretch (pro residues) spans 637-650; sequence APAPPKPGNLPPGH. Over residues 653 to 690 the composition is skewed to low complexity; it reads GQSSPGTGTSPKPSARSPSPPQQQQQQQQQQQQQQQQQ. Phosphoserine occurs at positions 698 and 700. Composition is skewed to pro residues over residues 704 to 717 and 726 to 741; these read IQAP…PPTQ and EPGP…PSTP. Phosphothreonine occurs at positions 730, 734, and 736. The short motif at 730 to 743 is the SH3-binding element; that stretch reads TPPQTPTPPSTPPL. Position 739 is a phosphoserine (Ser-739). Residue Thr-740 is modified to Phosphothreonine. Positions 746-757 are enriched in polar residues; the sequence is QNPSQSETTQLH. Residues 772-782 show a composition bias toward pro residues; that stretch reads RPSVPPPPHPP. A compositionally biased stretch (polar residues) spans 791–807; sequence LTSSVPTASRIVTDTNS.

In terms of assembly, component of a complex whose core is composed of ARHGAP17, AMOT, PALS1, PATJ and PARD3/PAR3. Interacts with NHERF1, FNBP1, TRIP10, CAPZA (CAPZA1, CAPZA2 or CAPZA3), CAPZB, CD2AP and SH3KBP1/CIN85.

The protein localises to the membrane. It is found in the cytoplasm. Its subcellular location is the cell junction. It localises to the tight junction. Functionally, rho GTPase-activating protein involved in the maintenance of tight junction by regulating the activity of CDC42, thereby playing a central role in apical polarity of epithelial cells. Specifically acts as a GTPase activator for the CDC42 GTPase by converting it to an inactive GDP-bound state. The complex formed with AMOT acts by regulating the uptake of polarity proteins at tight junctions, possibly by deciding whether tight junction transmembrane proteins are recycled back to the plasma membrane or sent elsewhere. Participates in the Ca(2+)-dependent regulation of exocytosis, possibly by catalyzing GTPase activity of Rho family proteins and by inducing the reorganization of the cortical actin filaments. Acts as a GTPase activator in vitro for RAC1. This is Rho GTPase-activating protein 17 (Arhgap17) from Mus musculus (Mouse).